The chain runs to 430 residues: GTPase Obg (430 aa).

An Obg domain is found at 1 to 158; it reads MFIDTAKVFV…LNIVLELKLL (158 aa). Positions 159-331 constitute an OBG-type G domain; the sequence is ADVGLLGFPN…VMKEAARILK (173 aa). GTP-binding positions include 165–172, 190–194, 212–215, 282–285, and 312–314; these read GFPNVGKS, FTTLK, DIPG, NKSD, and SAA. Ser172 and Thr192 together coordinate Mg(2+). Residues 345–430 enclose the OCT domain; sequence MYIPEEKRFT…LNDFEFEYIL (86 aa).

The protein belongs to the TRAFAC class OBG-HflX-like GTPase superfamily. OBG GTPase family. Monomer. Requires Mg(2+) as cofactor.

The protein localises to the cytoplasm. Functionally, an essential GTPase which binds GTP, GDP and possibly (p)ppGpp with moderate affinity, with high nucleotide exchange rates and a fairly low GTP hydrolysis rate. Plays a role in control of the cell cycle, stress response, ribosome biogenesis and in those bacteria that undergo differentiation, in morphogenesis control. The protein is GTPase Obg of Clostridium beijerinckii (strain ATCC 51743 / NCIMB 8052) (Clostridium acetobutylicum).